A 259-amino-acid chain; its full sequence is Expansin-B6 (259 aa).

Residues 1–24 (MASSSHRYFALLALFAVSLKFCYC) form the signal peptide. Asn26 carries N-linked (GlcNAc...) asparagine glycosylation. An Expansin-like EG45 domain is found at 52-160 (GGACGFAVAN…IRVECLYRRT (109 aa)). Cystine bridges form between Cys55–Cys82, Cys85–Cys155, and Cys90–Cys96. The Expansin-like CBD domain occupies 173–254 (YYISFVVEYE…NWKPNETYRS (82 aa)). Asn249 carries N-linked (GlcNAc...) asparagine glycosylation.

Belongs to the expansin family. Expansin B subfamily.

The protein localises to the secreted. It is found in the cell wall. Its subcellular location is the membrane. Functionally, may cause loosening and extension of plant cell walls by disrupting non-covalent bonding between cellulose microfibrils and matrix glucans. The protein is Expansin-B6 of Arabidopsis thaliana (Mouse-ear cress).